A 129-amino-acid polypeptide reads, in one-letter code: MNDLINFEIVTPLGVIYQGEVKSVTLPGSEGEFGVLKGHAALVSSLKSGVIDIEKADLNHELIAIDAGHAKVDEDKICVLAKGAVWVCGSDESEIEKNLAQAKDLIKSMSSDNAALAATFSKLDNARMH.

This sequence belongs to the ATPase epsilon chain family. In terms of assembly, F-type ATPases have 2 components, CF(1) - the catalytic core - and CF(0) - the membrane proton channel. CF(1) has five subunits: alpha(3), beta(3), gamma(1), delta(1), epsilon(1). CF(0) has three main subunits: a, b and c.

It localises to the cell inner membrane. Its function is as follows. Produces ATP from ADP in the presence of a proton gradient across the membrane. This Campylobacter jejuni subsp. jejuni serotype O:2 (strain ATCC 700819 / NCTC 11168) protein is ATP synthase epsilon chain.